The sequence spans 169 residues: Peptide methionine sulfoxide reductase MsrA (169 aa).

Cysteine 10 is an active-site residue.

It belongs to the MsrA Met sulfoxide reductase family.

The catalysed reaction is L-methionyl-[protein] + [thioredoxin]-disulfide + H2O = L-methionyl-(S)-S-oxide-[protein] + [thioredoxin]-dithiol. The enzyme catalyses [thioredoxin]-disulfide + L-methionine + H2O = L-methionine (S)-S-oxide + [thioredoxin]-dithiol. Has an important function as a repair enzyme for proteins that have been inactivated by oxidation. Catalyzes the reversible oxidation-reduction of methionine sulfoxide in proteins to methionine. The sequence is that of Peptide methionine sulfoxide reductase MsrA from Streptococcus mutans serotype c (strain ATCC 700610 / UA159).